The following is a 405-amino-acid chain: Cytochrome P450 107B1 (405 aa).

Cysteine 352 provides a ligand contact to heme.

This sequence belongs to the cytochrome P450 family. It depends on heme as a cofactor.

The protein localises to the cytoplasm. Functionally, not known, probably involved in the catabolism of octane and guaiacol. It displays a weak activity in the O-dealkylation of 7-ethoxycoumarin. This is Cytochrome P450 107B1 (cyp107B1) from Saccharopolyspora erythraea (strain ATCC 11635 / DSM 40517 / JCM 4748 / NBRC 13426 / NCIMB 8594 / NRRL 2338).